The primary structure comprises 163 residues: R-phycoerythrin alpha chain (163 aa).

(2R,3E)-phycoerythrobilin is bound by residues cysteine 82 and cysteine 139.

It belongs to the phycobiliprotein family. As to quaternary structure, heterodimer of an alpha and a beta chain. Post-translationally, contains two covalently linked bilin chromophores.

It localises to the plastid. The protein resides in the chloroplast thylakoid membrane. Light-harvesting photosynthetic bile pigment-protein from the phycobiliprotein complex. This chain is R-phycoerythrin alpha chain (cpeA), found in Aglaothamnion neglectum (Red alga).